The following is a 956-amino-acid chain: Bifunctional glutamine synthetase adenylyltransferase/adenylyl-removing enzyme (956 aa).

The segment at 1–441 (MLPLSTPLLA…IFTQLIGDDS (441 aa)) is adenylyl removase. An adenylyl transferase region spans residues 450–956 (HVPFKSLWLE…RRSWQQWLGE (507 aa)).

Belongs to the GlnE family. Requires Mg(2+) as cofactor.

It carries out the reaction [glutamine synthetase]-O(4)-(5'-adenylyl)-L-tyrosine + phosphate = [glutamine synthetase]-L-tyrosine + ADP. The catalysed reaction is [glutamine synthetase]-L-tyrosine + ATP = [glutamine synthetase]-O(4)-(5'-adenylyl)-L-tyrosine + diphosphate. In terms of biological role, involved in the regulation of glutamine synthetase GlnA, a key enzyme in the process to assimilate ammonia. When cellular nitrogen levels are high, the C-terminal adenylyl transferase (AT) inactivates GlnA by covalent transfer of an adenylyl group from ATP to specific tyrosine residue of GlnA, thus reducing its activity. Conversely, when nitrogen levels are low, the N-terminal adenylyl removase (AR) activates GlnA by removing the adenylyl group by phosphorolysis, increasing its activity. The regulatory region of GlnE binds the signal transduction protein PII (GlnB) which indicates the nitrogen status of the cell. In Photorhabdus laumondii subsp. laumondii (strain DSM 15139 / CIP 105565 / TT01) (Photorhabdus luminescens subsp. laumondii), this protein is Bifunctional glutamine synthetase adenylyltransferase/adenylyl-removing enzyme.